We begin with the raw amino-acid sequence, 137 residues long: Small ribosomal subunit protein uS12 (137 aa).

Asp-102 carries the 3-methylthioaspartic acid modification.

This sequence belongs to the universal ribosomal protein uS12 family. As to quaternary structure, part of the 30S ribosomal subunit. Contacts proteins S8 and S17. May interact with IF1 in the 30S initiation complex.

With S4 and S5 plays an important role in translational accuracy. Its function is as follows. Interacts with and stabilizes bases of the 16S rRNA that are involved in tRNA selection in the A site and with the mRNA backbone. Located at the interface of the 30S and 50S subunits, it traverses the body of the 30S subunit contacting proteins on the other side and probably holding the rRNA structure together. The combined cluster of proteins S8, S12 and S17 appears to hold together the shoulder and platform of the 30S subunit. This chain is Small ribosomal subunit protein uS12, found in Mycoplasmopsis agalactiae (strain NCTC 10123 / CIP 59.7 / PG2) (Mycoplasma agalactiae).